Consider the following 248-residue polypeptide: 3-deoxy-manno-octulosonate cytidylyltransferase (248 aa).

The protein belongs to the KdsB family.

Its subcellular location is the cytoplasm. It catalyses the reaction 3-deoxy-alpha-D-manno-oct-2-ulosonate + CTP = CMP-3-deoxy-beta-D-manno-octulosonate + diphosphate. Its pathway is nucleotide-sugar biosynthesis; CMP-3-deoxy-D-manno-octulosonate biosynthesis; CMP-3-deoxy-D-manno-octulosonate from 3-deoxy-D-manno-octulosonate and CTP: step 1/1. It functions in the pathway bacterial outer membrane biogenesis; lipopolysaccharide biosynthesis. In terms of biological role, activates KDO (a required 8-carbon sugar) for incorporation into bacterial lipopolysaccharide in Gram-negative bacteria. The chain is 3-deoxy-manno-octulosonate cytidylyltransferase from Shigella boydii serotype 18 (strain CDC 3083-94 / BS512).